Reading from the N-terminus, the 943-residue chain is Isoleucine--tRNA ligase (943 aa).

The 'HIGH' region signature appears at 59 to 69 (PYANGQIHLGH). Position 577 (Glu-577) interacts with L-isoleucyl-5'-AMP. The 'KMSKS' region motif lies at 618–622 (KMSKS). Lys-621 is an ATP binding site. Positions 906, 909, 926, and 929 each coordinate Zn(2+).

It belongs to the class-I aminoacyl-tRNA synthetase family. IleS type 1 subfamily. As to quaternary structure, monomer. Zn(2+) is required as a cofactor.

It localises to the cytoplasm. It carries out the reaction tRNA(Ile) + L-isoleucine + ATP = L-isoleucyl-tRNA(Ile) + AMP + diphosphate. Functionally, catalyzes the attachment of isoleucine to tRNA(Ile). As IleRS can inadvertently accommodate and process structurally similar amino acids such as valine, to avoid such errors it has two additional distinct tRNA(Ile)-dependent editing activities. One activity is designated as 'pretransfer' editing and involves the hydrolysis of activated Val-AMP. The other activity is designated 'posttransfer' editing and involves deacylation of mischarged Val-tRNA(Ile). The polypeptide is Isoleucine--tRNA ligase (Xanthomonas campestris pv. campestris (strain B100)).